We begin with the raw amino-acid sequence, 320 residues long: Chorion protein S36 (320 aa).

Positions 1–18 (MNCFLFTLFFVAAPLATA) are cleaved as a signal peptide. 5 consecutive repeat copies span residues 178–181 (AAPV), 258–261 (AAPA), 266–269 (AAPA), 274–277 (AAPA), and Ala290. Positions 259-320 (APAQSYNAAP…YGSAPPASGY (62 aa)) are disordered.

It belongs to the chorion protein S36 family.

The protein resides in the secreted. Its function is as follows. Chorion membrane (egg shell) protein; plays a role in protecting the egg from the environment. The sequence is that of Chorion protein S36 (Cp36) from Ceratitis capitata (Mediterranean fruit fly).